Reading from the N-terminus, the 431-residue chain is uncharacterized protein (431 aa).

This is an uncharacterized protein from Acanthamoeba polyphaga (Amoeba).